A 126-amino-acid polypeptide reads, in one-letter code: Holo-[acyl-carrier-protein] synthase (126 aa).

The Mg(2+) site is built by aspartate 9 and glutamate 58.

It belongs to the P-Pant transferase superfamily. AcpS family. It depends on Mg(2+) as a cofactor.

It is found in the cytoplasm. The catalysed reaction is apo-[ACP] + CoA = holo-[ACP] + adenosine 3',5'-bisphosphate + H(+). Transfers the 4'-phosphopantetheine moiety from coenzyme A to a Ser of acyl-carrier-protein. The chain is Holo-[acyl-carrier-protein] synthase from Yersinia enterocolitica serotype O:8 / biotype 1B (strain NCTC 13174 / 8081).